Reading from the N-terminus, the 316-residue chain is Aspartate-semialdehyde dehydrogenase (316 aa).

NADP(+) contacts are provided by residues Thr13–Val16 and Arg41–Ser42. Residue Arg101 participates in phosphate binding. Cys132 (acyl-thioester intermediate) is an active-site residue. Residue Gln159 coordinates substrate. Residue Ser162 to Gly163 coordinates NADP(+). Position 216 (Lys216) interacts with phosphate. Arg238 provides a ligand contact to substrate. The active-site Proton acceptor is the His245. Asn316 is an NADP(+) binding site.

This sequence belongs to the aspartate-semialdehyde dehydrogenase family. In terms of assembly, homodimer.

The catalysed reaction is L-aspartate 4-semialdehyde + phosphate + NADP(+) = 4-phospho-L-aspartate + NADPH + H(+). Its pathway is amino-acid biosynthesis; L-lysine biosynthesis via DAP pathway; (S)-tetrahydrodipicolinate from L-aspartate: step 2/4. It participates in amino-acid biosynthesis; L-methionine biosynthesis via de novo pathway; L-homoserine from L-aspartate: step 2/3. It functions in the pathway amino-acid biosynthesis; L-threonine biosynthesis; L-threonine from L-aspartate: step 2/5. In terms of biological role, catalyzes the NADPH-dependent formation of L-aspartate-semialdehyde (L-ASA) by the reductive dephosphorylation of L-aspartyl-4-phosphate. This Vibrio mimicus protein is Aspartate-semialdehyde dehydrogenase (asd).